We begin with the raw amino-acid sequence, 244 residues long: 1-(5-phosphoribosyl)-5-[(5-phosphoribosylamino)methylideneamino] imidazole-4-carboxamide isomerase (244 aa).

Asp8 functions as the Proton acceptor in the catalytic mechanism. The Proton donor role is filled by Asp131.

This sequence belongs to the HisA/HisF family.

It is found in the cytoplasm. The catalysed reaction is 1-(5-phospho-beta-D-ribosyl)-5-[(5-phospho-beta-D-ribosylamino)methylideneamino]imidazole-4-carboxamide = 5-[(5-phospho-1-deoxy-D-ribulos-1-ylimino)methylamino]-1-(5-phospho-beta-D-ribosyl)imidazole-4-carboxamide. It functions in the pathway amino-acid biosynthesis; L-histidine biosynthesis; L-histidine from 5-phospho-alpha-D-ribose 1-diphosphate: step 4/9. The polypeptide is 1-(5-phosphoribosyl)-5-[(5-phosphoribosylamino)methylideneamino] imidazole-4-carboxamide isomerase (Thermomicrobium roseum (strain ATCC 27502 / DSM 5159 / P-2)).